We begin with the raw amino-acid sequence, 225 residues long: Enolase-phosphatase E1 (225 aa).

This sequence belongs to the HAD-like hydrolase superfamily. MasA/MtnC family. Monomer. Mg(2+) serves as cofactor.

The catalysed reaction is 5-methylsulfanyl-2,3-dioxopentyl phosphate + H2O = 1,2-dihydroxy-5-(methylsulfanyl)pent-1-en-3-one + phosphate. It participates in amino-acid biosynthesis; L-methionine biosynthesis via salvage pathway; L-methionine from S-methyl-5-thio-alpha-D-ribose 1-phosphate: step 3/6. It functions in the pathway amino-acid biosynthesis; L-methionine biosynthesis via salvage pathway; L-methionine from S-methyl-5-thio-alpha-D-ribose 1-phosphate: step 4/6. Its function is as follows. Bifunctional enzyme that catalyzes the enolization of 2,3-diketo-5-methylthiopentyl-1-phosphate (DK-MTP-1-P) into the intermediate 2-hydroxy-3-keto-5-methylthiopentenyl-1-phosphate (HK-MTPenyl-1-P), which is then dephosphorylated to form the acireductone 1,2-dihydroxy-3-keto-5-methylthiopentene (DHK-MTPene). In Shewanella woodyi (strain ATCC 51908 / MS32), this protein is Enolase-phosphatase E1.